We begin with the raw amino-acid sequence, 199 residues long: 7-methyl-GTP pyrophosphatase (199 aa).

Catalysis depends on aspartate 76, which acts as the Proton acceptor.

It belongs to the Maf family. YceF subfamily. The cofactor is a divalent metal cation.

It is found in the cytoplasm. The catalysed reaction is N(7)-methyl-GTP + H2O = N(7)-methyl-GMP + diphosphate + H(+). Its function is as follows. Nucleoside triphosphate pyrophosphatase that hydrolyzes 7-methyl-GTP (m(7)GTP). May have a dual role in cell division arrest and in preventing the incorporation of modified nucleotides into cellular nucleic acids. The protein is 7-methyl-GTP pyrophosphatase of Rhizobium meliloti (strain 1021) (Ensifer meliloti).